We begin with the raw amino-acid sequence, 74 residues long: Translation initiation factor IF-1 (74 aa).

The S1-like domain maps to 1 to 72 (MSKEDAIEME…NKGRITYRLK (72 aa)).

This sequence belongs to the IF-1 family. In terms of assembly, component of the 30S ribosomal translation pre-initiation complex which assembles on the 30S ribosome in the order IF-2 and IF-3, IF-1 and N-formylmethionyl-tRNA(fMet); mRNA recruitment can occur at any time during PIC assembly.

The protein localises to the cytoplasm. Its function is as follows. One of the essential components for the initiation of protein synthesis. Stabilizes the binding of IF-2 and IF-3 on the 30S subunit to which N-formylmethionyl-tRNA(fMet) subsequently binds. Helps modulate mRNA selection, yielding the 30S pre-initiation complex (PIC). Upon addition of the 50S ribosomal subunit IF-1, IF-2 and IF-3 are released leaving the mature 70S translation initiation complex. The polypeptide is Translation initiation factor IF-1 (Synechococcus sp. (strain JA-2-3B'a(2-13)) (Cyanobacteria bacterium Yellowstone B-Prime)).